A 149-amino-acid polypeptide reads, in one-letter code: Protein SprT-like (149 aa).

The SprT-like domain occupies 4–143 (TDYVKQVSLE…CGLCRGKLLL (140 aa)). Zn(2+) is bound at residue His-64. The active site involves Glu-65. Residue His-68 coordinates Zn(2+).

It belongs to the SprT family. Zn(2+) serves as cofactor.

Its subcellular location is the cytoplasm. In Streptococcus pneumoniae (strain Taiwan19F-14), this protein is Protein SprT-like.